Here is a 246-residue protein sequence, read N- to C-terminus: Ribonuclease PH (246 aa).

Residues R91 and G129–R131 contribute to the phosphate site.

It belongs to the RNase PH family. As to quaternary structure, homohexameric ring arranged as a trimer of dimers.

It carries out the reaction tRNA(n+1) + phosphate = tRNA(n) + a ribonucleoside 5'-diphosphate. Its function is as follows. Phosphorolytic 3'-5' exoribonuclease that plays an important role in tRNA 3'-end maturation. Removes nucleotide residues following the 3'-CCA terminus of tRNAs; can also add nucleotides to the ends of RNA molecules by using nucleoside diphosphates as substrates, but this may not be physiologically important. Probably plays a role in initiation of 16S rRNA degradation (leading to ribosome degradation) during starvation. The protein is Ribonuclease PH of Burkholderia ambifaria (strain MC40-6).